The primary structure comprises 201 residues: MAAKSKKILLQNLNSFVLDSILAIKDGEETPQSDASLVANLRKQWESSEFQKKMAVEVFGIKGKNLTPGPKRNKSAYMFFCQDMRQNIVADNPDCKPHQIMSLLGCKWRELTTKQKSQYYKQAADDKERYLDDKELEKRRNKTPSKLSSYFLFCEDERPIVKKEFPNMSTKKVTAECGKRWNEMKINDPKKYKYYVEKAAK.

2 consecutive DNA-binding regions (HMG box) follow at residues 70 to 138 (PKRN…ELEK) and 143 to 201 (TPSK…KAAK).

The protein belongs to the IIV-6 401R family.

The protein localises to the host nucleus. The sequence is that of High mobility group protein homolog 068R from Invertebrate iridescent virus 3 (IIV-3).